Here is a 253-residue protein sequence, read N- to C-terminus: Tryptophan synthase alpha chain (253 aa).

Residues glutamate 47 and aspartate 58 each act as proton acceptor in the active site.

The protein belongs to the TrpA family. In terms of assembly, tetramer of two alpha and two beta chains.

It catalyses the reaction (1S,2R)-1-C-(indol-3-yl)glycerol 3-phosphate + L-serine = D-glyceraldehyde 3-phosphate + L-tryptophan + H2O. Its pathway is amino-acid biosynthesis; L-tryptophan biosynthesis; L-tryptophan from chorismate: step 5/5. The alpha subunit is responsible for the aldol cleavage of indoleglycerol phosphate to indole and glyceraldehyde 3-phosphate. The chain is Tryptophan synthase alpha chain from Desulforapulum autotrophicum (strain ATCC 43914 / DSM 3382 / VKM B-1955 / HRM2) (Desulfobacterium autotrophicum).